The primary structure comprises 307 residues: MPKKCRHLLQTSDLSLDEIKLLLEKASVYANDFNAVSLETKEKMHNKIIVALFFENSTRTVSSFEIASLRLGAKIVKLNMQTSSASKGETLTDTFKNIHAMQPDAIITRHAFSSAPFKLAEFSQCPLINAGSGVSAHPTQALLDLLTLYQHFGSLENLKGKKIAFIGDVKNSRVANSNIKLLQRLGLEIMLCAPSSMLPSVSLKTTHNVEEAIAFADILMSLRTQTERHNTPIFASLKDYGNAYCITQQRLKAHAKNKEVIILHPGPVHRDIDIESAVLEDERSKVLEQVKNGVAMRMAVLEFLLLD.

Carbamoyl phosphate-binding residues include Arg59 and Thr60. Lys87 contacts L-aspartate. Arg109, His137, and Gln140 together coordinate carbamoyl phosphate. Residues Arg173 and Arg223 each contribute to the L-aspartate site. Gly266 and Pro267 together coordinate carbamoyl phosphate.

Belongs to the aspartate/ornithine carbamoyltransferase superfamily. ATCase family. As to quaternary structure, heterododecamer (2C3:3R2) of six catalytic PyrB chains organized as two trimers (C3), and six regulatory PyrI chains organized as three dimers (R2).

It catalyses the reaction carbamoyl phosphate + L-aspartate = N-carbamoyl-L-aspartate + phosphate + H(+). The protein operates within pyrimidine metabolism; UMP biosynthesis via de novo pathway; (S)-dihydroorotate from bicarbonate: step 2/3. Functionally, catalyzes the condensation of carbamoyl phosphate and aspartate to form carbamoyl aspartate and inorganic phosphate, the committed step in the de novo pyrimidine nucleotide biosynthesis pathway. In Helicobacter pylori (strain ATCC 700392 / 26695) (Campylobacter pylori), this protein is Aspartate carbamoyltransferase catalytic subunit.